The sequence spans 767 residues: 5-methyltetrahydropteroyltriglutamate--homocysteine methyltransferase (767 aa).

5-methyltetrahydropteroyltri-L-glutamate-binding positions include R17–K20 and K117. Residues I442 to S444 and E495 each bind L-homocysteine. L-methionine is bound by residues I442–S444 and E495. 5-methyltetrahydropteroyltri-L-glutamate-binding positions include R526 to C527 and W572. D610 contacts L-homocysteine. D610 serves as a coordination point for L-methionine. E616 serves as a coordination point for 5-methyltetrahydropteroyltri-L-glutamate. Zn(2+) contacts are provided by H653, C655, and E677. Catalysis depends on H706, which acts as the Proton donor. Position 738 (C738) interacts with Zn(2+).

The protein belongs to the vitamin-B12 independent methionine synthase family. Requires Zn(2+) as cofactor.

The catalysed reaction is 5-methyltetrahydropteroyltri-L-glutamate + L-homocysteine = tetrahydropteroyltri-L-glutamate + L-methionine. Its pathway is amino-acid biosynthesis; L-methionine biosynthesis via de novo pathway; L-methionine from L-homocysteine (MetE route): step 1/1. Its function is as follows. Catalyzes the transfer of a methyl group from 5-methyltetrahydrofolate to homocysteine resulting in methionine formation. This Bifidobacterium animalis subsp. lactis (strain AD011) protein is 5-methyltetrahydropteroyltriglutamate--homocysteine methyltransferase.